A 1027-amino-acid chain; its full sequence is Abnormal embryogenesis protein 30 (1027 aa).

2 WD repeats span residues 18-65 and 70-109; these read RTPF…IQAV and KLDS…VRFS. Disordered stretches follow at residues 619–655 and 1005–1027; these read NDSS…ACDL and AMDS…DDDI. Acidic residues-rich tracts occupy residues 625–647 and 1014–1027; these read LEED…EPEG and DNGE…DDDI.

Belongs to the APC4 family. As to quaternary structure, the APC/C is probably composed of at least 12 subunits: apc-2, apc-10, apc-11, cdc-26, emb-1, emb-27, emb-30, mat-1, mat-2, mat-3, such-1 and gfi-3.

It functions in the pathway protein modification; protein ubiquitination. Functionally, probable component of the anaphase promoting complex/cyclosome (APC/C), a cell cycle-regulated E3 ubiquitin ligase that controls progression through mitosis and the G1 phase of the cell cycle. The APC/C complex acts by mediating ubiquitination and subsequent degradation of target proteins. Developmental role in early embryogenesis and the metaphase to anaphase transition in oocyte and spermatocyte meiosis and mitosis in somatic and germ cells. Required for embryonic anterior-posterior axis formation. Negatively regulates ify-1 protein levels during meiosis I. Plays a role in regulating the abundance of glr-1 receptors in postmitotic neurons, which may in turn control animal locomotion. Involved in regulating GABA neurotransmitter release at neuromuscular junctions in GABA motor neurons. The sequence is that of Abnormal embryogenesis protein 30 from Caenorhabditis elegans.